We begin with the raw amino-acid sequence, 476 residues long: Bifunctional protein HldE (476 aa).

The segment at methionine 1–asparagine 318 is ribokinase. Asparagine 195 to glutamate 198 contacts ATP. Residue aspartate 263 is part of the active site. The segment at phenylalanine 345–asparagine 476 is cytidylyltransferase.

In the N-terminal section; belongs to the carbohydrate kinase PfkB family. This sequence in the C-terminal section; belongs to the cytidylyltransferase family. As to quaternary structure, homodimer.

It carries out the reaction D-glycero-beta-D-manno-heptose 7-phosphate + ATP = D-glycero-beta-D-manno-heptose 1,7-bisphosphate + ADP + H(+). It catalyses the reaction D-glycero-beta-D-manno-heptose 1-phosphate + ATP + H(+) = ADP-D-glycero-beta-D-manno-heptose + diphosphate. Its pathway is nucleotide-sugar biosynthesis; ADP-L-glycero-beta-D-manno-heptose biosynthesis; ADP-L-glycero-beta-D-manno-heptose from D-glycero-beta-D-manno-heptose 7-phosphate: step 1/4. It participates in nucleotide-sugar biosynthesis; ADP-L-glycero-beta-D-manno-heptose biosynthesis; ADP-L-glycero-beta-D-manno-heptose from D-glycero-beta-D-manno-heptose 7-phosphate: step 3/4. In terms of biological role, catalyzes the phosphorylation of D-glycero-D-manno-heptose 7-phosphate at the C-1 position to selectively form D-glycero-beta-D-manno-heptose-1,7-bisphosphate. Functionally, catalyzes the ADP transfer from ATP to D-glycero-beta-D-manno-heptose 1-phosphate, yielding ADP-D-glycero-beta-D-manno-heptose. This is Bifunctional protein HldE from Aliarcobacter butzleri (strain RM4018) (Arcobacter butzleri).